The chain runs to 279 residues: MSVSAFIRITRPHNAVVAGLTALIGYLIATGTLTPPSLLLAVIVALITAGGNVINDVRDVEIDRINRPDRPIPAGDISLAGARAYAAALFVGGIAIATLTTTLCLAIAIINSVILIVYAVRLKRTPVLGNVAVAYLAGSVFLFGGAFAGIEGLVRNLSLAAITFLATIARELLKDAEDVDGDAAGGARTLPMIVGVRKTGIFAFACACGAVAASLLPFGDWWGLFYLAGIAVVDLVILFGAFRGLSCTTPGCVRESNATSILRAGMFAALAVFAIAAVI.

6 helical membrane passes run 27 to 47 (LIAT…VALI), 90 to 110 (FVGG…IAII), 127 to 147 (VLGN…GGAF), 199 to 219 (TGIF…LPFG), 222 to 242 (WGLF…FGAF), and 259 to 279 (TSIL…AAVI).

The protein belongs to the UbiA prenyltransferase family. DGGGP synthase subfamily. Requires Mg(2+) as cofactor.

It localises to the cell membrane. It catalyses the reaction sn-3-O-(geranylgeranyl)glycerol 1-phosphate + (2E,6E,10E)-geranylgeranyl diphosphate = 2,3-bis-O-(geranylgeranyl)-sn-glycerol 1-phosphate + diphosphate. The protein operates within membrane lipid metabolism; glycerophospholipid metabolism. Its function is as follows. Prenyltransferase that catalyzes the transfer of the geranylgeranyl moiety of geranylgeranyl diphosphate (GGPP) to the C2 hydroxyl of (S)-3-O-geranylgeranylglyceryl phosphate (GGGP). This reaction is the second ether-bond-formation step in the biosynthesis of archaeal membrane lipids. The protein is Digeranylgeranylglyceryl phosphate synthase of Methanoculleus marisnigri (strain ATCC 35101 / DSM 1498 / JR1).